The chain runs to 101 residues: Small ribosomal subunit protein uS14 (101 aa).

Belongs to the universal ribosomal protein uS14 family. In terms of assembly, part of the 30S ribosomal subunit. Contacts proteins S3 and S10.

Functionally, binds 16S rRNA, required for the assembly of 30S particles and may also be responsible for determining the conformation of the 16S rRNA at the A site. This is Small ribosomal subunit protein uS14 from Chromohalobacter salexigens (strain ATCC BAA-138 / DSM 3043 / CIP 106854 / NCIMB 13768 / 1H11).